The primary structure comprises 62 residues: DNA-directed RNA polymerase subunit Rpo10 (62 aa).

Zn(2+)-binding residues include cysteine 6, cysteine 9, cysteine 43, and cysteine 44.

This sequence belongs to the archaeal Rpo10/eukaryotic RPB10 RNA polymerase subunit family. In terms of assembly, part of the RNA polymerase complex. Zn(2+) is required as a cofactor.

The protein localises to the cytoplasm. The catalysed reaction is RNA(n) + a ribonucleoside 5'-triphosphate = RNA(n+1) + diphosphate. Its function is as follows. DNA-dependent RNA polymerase (RNAP) catalyzes the transcription of DNA into RNA using the four ribonucleoside triphosphates as substrates. The protein is DNA-directed RNA polymerase subunit Rpo10 of Methanospirillum hungatei JF-1 (strain ATCC 27890 / DSM 864 / NBRC 100397 / JF-1).